A 94-amino-acid chain; its full sequence is Long neurotoxin-like OH-31 (94 aa).

Positions 1 to 19 (MKTLLLTLVVVTILCLDLG) are cleaved as a signal peptide. 4 disulfide bridges follow: cysteine 35-cysteine 55, cysteine 37-cysteine 66, cysteine 70-cysteine 81, and cysteine 82-cysteine 87.

This sequence belongs to the three-finger toxin family. Long-chain subfamily. Type II alpha-neurotoxin sub-subfamily. In terms of tissue distribution, expressed by the venom gland.

It is found in the secreted. In terms of biological role, binds with high affinity to muscular nicotinic acetylcholine receptors (nAChRs), whereas it binds with a low affinity to neuronal alpha-7/CHRNA7 nAChRs. The polypeptide is Long neurotoxin-like OH-31 (Ophiophagus hannah (King cobra)).